Reading from the N-terminus, the 141-residue chain is Hemoglobin subunit alpha (141 aa).

Positions 1–141 (VLSSTDKSNV…VSTVLTSKYR (141 aa)) constitute a Globin domain. Residue Ser-3 is modified to Phosphoserine. N6-succinyllysine occurs at positions 7 and 11. N6-acetyllysine; alternate is present on Lys-16. Lys-16 bears the N6-succinyllysine; alternate mark. Phosphotyrosine is present on Tyr-24. Ser-35 carries the phosphoserine modification. Lys-40 bears the N6-succinyllysine mark. O2 is bound at residue His-58. His-87 contacts heme b. The residue at position 102 (Ser-102) is a Phosphoserine. Thr-108 bears the Phosphothreonine mark. A phosphoserine mark is found at Ser-124 and Ser-131. Thr-134 and Thr-137 each carry phosphothreonine. Position 138 is a phosphoserine (Ser-138).

The protein belongs to the globin family. As to quaternary structure, heterotetramer of two alpha chains and two beta chains. In terms of tissue distribution, red blood cells.

In terms of biological role, involved in oxygen transport from the lung to the various peripheral tissues. Its function is as follows. Hemopressin acts as an antagonist peptide of the cannabinoid receptor CNR1. Hemopressin-binding efficiently blocks cannabinoid receptor CNR1 and subsequent signaling. The protein is Hemoglobin subunit alpha (HBA) of Pteropus poliocephalus (Grey-headed flying fox).